The sequence spans 492 residues: Ribose import ATP-binding protein RbsA (492 aa).

ABC transporter domains are found at residues 3–239 (IEMK…VGRS) and 249–492 (AEIR…TGGK). 35-42 (GENGAGKS) provides a ligand contact to ATP.

The protein belongs to the ABC transporter superfamily. Ribose importer (TC 3.A.1.2.1) family. In terms of assembly, the complex is composed of an ATP-binding protein (RbsA), two transmembrane proteins (RbsC) and a solute-binding protein (RbsB).

It localises to the cell membrane. It carries out the reaction D-ribose(out) + ATP + H2O = D-ribose(in) + ADP + phosphate + H(+). Part of the ABC transporter complex RbsABC involved in ribose import. Responsible for energy coupling to the transport system. This chain is Ribose import ATP-binding protein RbsA, found in Lactococcus lactis subsp. cremoris (strain SK11).